A 128-amino-acid chain; its full sequence is Ig kappa chain V-V region T1 (128 aa).

Positions methionine 1 to cysteine 20 are cleaved as a signal peptide. A framework-1 region spans residues aspartate 21–cysteine 43. Cysteines 43 and 108 form a disulfide. The segment at lysine 44–threonine 54 is complementarity-determining-1. The interval tryptophan 55–tyrosine 69 is framework-2. The complementarity-determining-2 stretch occupies residues arginine 70–aspartate 76. The interval glycine 77 to cysteine 108 is framework-3. The interval leucine 109 to threonine 117 is complementarity-determining-3. The framework-4 stretch occupies residues phenylalanine 118–lysine 127.

The chain is Ig kappa chain V-V region T1 from Mus musculus (Mouse).